Consider the following 248-residue polypeptide: tRNA (guanine-N(1)-)-methyltransferase (248 aa).

Residues Gly113 and Ile133–Leu138 each bind S-adenosyl-L-methionine.

Belongs to the RNA methyltransferase TrmD family. In terms of assembly, homodimer.

The protein resides in the cytoplasm. It carries out the reaction guanosine(37) in tRNA + S-adenosyl-L-methionine = N(1)-methylguanosine(37) in tRNA + S-adenosyl-L-homocysteine + H(+). Its function is as follows. Specifically methylates guanosine-37 in various tRNAs. This Dehalococcoides mccartyi (strain CBDB1) protein is tRNA (guanine-N(1)-)-methyltransferase.